The chain runs to 867 residues: Probable beta-glucosidase A (867 aa).

Residues 1–18 (MRFSWLEVAVTAASLANA) form the signal peptide. Asn67, Asn218, and Asn259 each carry an N-linked (GlcNAc...) asparagine glycan. Asp287 is a catalytic residue. Residues Asn322, Asn329, Asn361, Asn449, Asn530, Asn549, Asn571, Asn675, and Asn719 are each glycosylated (N-linked (GlcNAc...) asparagine).

The protein belongs to the glycosyl hydrolase 3 family.

It is found in the secreted. The enzyme catalyses Hydrolysis of terminal, non-reducing beta-D-glucosyl residues with release of beta-D-glucose.. Its pathway is glycan metabolism; cellulose degradation. Functionally, beta-glucosidases are one of a number of cellulolytic enzymes involved in the degradation of cellulosic biomass. Catalyzes the last step releasing glucose from the inhibitory cellobiose. This is Probable beta-glucosidase A (bglA) from Aspergillus clavatus (strain ATCC 1007 / CBS 513.65 / DSM 816 / NCTC 3887 / NRRL 1 / QM 1276 / 107).